Consider the following 496-residue polypeptide: Docking protein 3 (496 aa).

The tract at residues 18–38 (LSLDGGTGSGQKGKCEEFPSS) is disordered. The PH domain occupies 63–179 (PIKDGILYQQ…WMGPICQLAF (117 aa)). At Ser194 the chain carries Phosphoserine. Positions 213 to 317 (EVGEFPVVVQ…ARQRERLPEL (105 aa)) constitute an IRS-type PTB domain. The interval 313-363 (RLPELTRPQPCPLPRATSLPSLDTPGELREMPPGPEPPTSRKMHLAEPGPQ) is disordered. Residues Ser330 and Ser364 each carry the phosphoserine modification. At Tyr381 the chain carries Phosphotyrosine. The tract at residues 408–447 (PTLHGGEPEPHEGPGSRSPTTSPIYHNGQDLSWPGPANDS) is disordered. Ser425 is subject to Phosphoserine.

The protein belongs to the DOK family. Type A subfamily. As to quaternary structure, on tyrosine phosphorylation, interacts with CSK and INPP5D/SHIP1 via their SH2 domains. Both Tyr-381 and Tyr-398 are required for interaction with INPP5D. Only Tyr-381 is required for interaction with CSK. Binds ABL1 through the PTB domain and in a kinase-dependent manner. Does not interact with RasGAP. Post-translationally, constitutively tyrosine-phosphorylated. In terms of processing, on IL2 stimulation, phosphorylated on C-terminal tyrosine residues possibly by Src kinases. Can also be phosphorylated by ABL1 kinase. In terms of tissue distribution, expressed in spleen.

Its subcellular location is the cytoplasm. It localises to the cell membrane. Its function is as follows. DOK proteins are enzymatically inert adaptor or scaffolding proteins. They provide a docking platform for the assembly of multimolecular signaling complexes. DOK3 is a negative regulator of JNK signaling in B-cells through interaction with INPP5D/SHIP1. May modulate ABL1 function. The polypeptide is Docking protein 3 (DOK3) (Homo sapiens (Human)).